A 312-amino-acid polypeptide reads, in one-letter code: Large ribosomal subunit protein uL15m (312 aa).

Residues 63–89 (RIRKGRGPSSGYGKTAGRGTKGQKAHG) form a disordered region. Positions 70 to 82 (PSSGYGKTAGRGT) are enriched in gly residues.

The protein belongs to the universal ribosomal protein uL15 family. Component of the mitochondrial large ribosomal subunit (mt-LSU). Mature N.crassa 74S mitochondrial ribosomes consist of a small (37S) and a large (54S) subunit. The 37S small subunit contains a 16S ribosomal RNA (16S mt-rRNA) and 32 different proteins. The 54S large subunit contains a 23S rRNA (23S mt-rRNA) and 42 different proteins.

It localises to the mitochondrion. Its function is as follows. Component of the mitochondrial ribosome (mitoribosome), a dedicated translation machinery responsible for the synthesis of mitochondrial genome-encoded proteins, including at least some of the essential transmembrane subunits of the mitochondrial respiratory chain. The mitoribosomes are attached to the mitochondrial inner membrane and translation products are cotranslationally integrated into the membrane. The polypeptide is Large ribosomal subunit protein uL15m (mrpl10) (Neurospora crassa (strain ATCC 24698 / 74-OR23-1A / CBS 708.71 / DSM 1257 / FGSC 987)).